Reading from the N-terminus, the 101-residue chain is Small ribosomal subunit protein uS14 (101 aa).

The protein belongs to the universal ribosomal protein uS14 family. In terms of assembly, part of the 30S ribosomal subunit. Contacts proteins S3 and S10.

Functionally, binds 16S rRNA, required for the assembly of 30S particles and may also be responsible for determining the conformation of the 16S rRNA at the A site. This is Small ribosomal subunit protein uS14 from Acinetobacter baumannii (strain AB307-0294).